A 619-amino-acid chain; its full sequence is Dihydroxy-acid dehydratase 1 (619 aa).

Residue aspartate 81 participates in Mg(2+) binding. Cysteine 122 is a [2Fe-2S] cluster binding site. Positions 123 and 124 each coordinate Mg(2+). Residue lysine 124 is modified to N6-carboxylysine. Cysteine 201 lines the [2Fe-2S] cluster pocket. A Mg(2+)-binding site is contributed by glutamate 496. Serine 522 serves as the catalytic Proton acceptor.

It belongs to the IlvD/Edd family. As to quaternary structure, homodimer. [2Fe-2S] cluster serves as cofactor. Requires Mg(2+) as cofactor.

It carries out the reaction (2R)-2,3-dihydroxy-3-methylbutanoate = 3-methyl-2-oxobutanoate + H2O. It catalyses the reaction (2R,3R)-2,3-dihydroxy-3-methylpentanoate = (S)-3-methyl-2-oxopentanoate + H2O. The protein operates within amino-acid biosynthesis; L-isoleucine biosynthesis; L-isoleucine from 2-oxobutanoate: step 3/4. It functions in the pathway amino-acid biosynthesis; L-valine biosynthesis; L-valine from pyruvate: step 3/4. Its function is as follows. Functions in the biosynthesis of branched-chain amino acids. Catalyzes the dehydration of (2R,3R)-2,3-dihydroxy-3-methylpentanoate (2,3-dihydroxy-3-methylvalerate) into 2-oxo-3-methylpentanoate (2-oxo-3-methylvalerate) and of (2R)-2,3-dihydroxy-3-methylbutanoate (2,3-dihydroxyisovalerate) into 2-oxo-3-methylbutanoate (2-oxoisovalerate), the penultimate precursor to L-isoleucine and L-valine, respectively. In Burkholderia lata (strain ATCC 17760 / DSM 23089 / LMG 22485 / NCIMB 9086 / R18194 / 383), this protein is Dihydroxy-acid dehydratase 1.